The primary structure comprises 256 residues: Leucyl/phenylalanyl-tRNA--protein transferase (256 aa).

The interval 232 to 256 (DGCTGASRHGPGADMRRGDMSREST) is disordered. Over residues 245 to 256 (DMRRGDMSREST) the composition is skewed to basic and acidic residues.

This sequence belongs to the L/F-transferase family.

It is found in the cytoplasm. The enzyme catalyses N-terminal L-lysyl-[protein] + L-leucyl-tRNA(Leu) = N-terminal L-leucyl-L-lysyl-[protein] + tRNA(Leu) + H(+). The catalysed reaction is N-terminal L-arginyl-[protein] + L-leucyl-tRNA(Leu) = N-terminal L-leucyl-L-arginyl-[protein] + tRNA(Leu) + H(+). It carries out the reaction L-phenylalanyl-tRNA(Phe) + an N-terminal L-alpha-aminoacyl-[protein] = an N-terminal L-phenylalanyl-L-alpha-aminoacyl-[protein] + tRNA(Phe). Functions in the N-end rule pathway of protein degradation where it conjugates Leu, Phe and, less efficiently, Met from aminoacyl-tRNAs to the N-termini of proteins containing an N-terminal arginine or lysine. In Chromohalobacter salexigens (strain ATCC BAA-138 / DSM 3043 / CIP 106854 / NCIMB 13768 / 1H11), this protein is Leucyl/phenylalanyl-tRNA--protein transferase.